The chain runs to 532 residues: Eukaryotic translation initiation factor 3 subunit D (532 aa).

The disordered stretch occupies residues 108-161 (ATVLKTRGGAPRGGSFAGRGGSQRGGRFQNQPGRGPVGGQRGPNPRFGKSKFGW). Over residues 117-131 (APRGGSFAGRGGSQR) the composition is skewed to gly residues. Low complexity predominate over residues 132–141 (GGRFQNQPGR). Residues 296 to 310 (PLDFITVDENAADPP) form an RNA gate region.

The protein belongs to the eIF-3 subunit D family. In terms of assembly, component of the eukaryotic translation initiation factor 3 (eIF-3) complex.

The protein localises to the cytoplasm. Functionally, mRNA cap-binding component of the eukaryotic translation initiation factor 3 (eIF-3) complex, which is involved in protein synthesis of a specialized repertoire of mRNAs and, together with other initiation factors, stimulates binding of mRNA and methionyl-tRNAi to the 40S ribosome. The eIF-3 complex specifically targets and initiates translation of a subset of mRNAs involved in cell proliferation. In the eIF-3 complex, eif3d specifically recognizes and binds the 7-methylguanosine cap of a subset of mRNAs. The protein is Eukaryotic translation initiation factor 3 subunit D of Yarrowia lipolytica (strain CLIB 122 / E 150) (Yeast).